A 123-amino-acid polypeptide reads, in one-letter code: Large ribosomal subunit protein uL18 (123 aa).

It belongs to the universal ribosomal protein uL18 family. Part of the 50S ribosomal subunit; part of the 5S rRNA/L5/L18/L25 subcomplex. Contacts the 5S and 23S rRNAs.

Functionally, this is one of the proteins that bind and probably mediate the attachment of the 5S RNA into the large ribosomal subunit, where it forms part of the central protuberance. This is Large ribosomal subunit protein uL18 from Bifidobacterium longum (strain DJO10A).